We begin with the raw amino-acid sequence, 258 residues long: L-2,3-butanediol dehydrogenase (258 aa).

NAD(+) is bound by residues 12–14 (QGI), aspartate 33, glutamine 37, 61–62 (DV), asparagine 88, tyrosine 154, lysine 158, and 184–189 (PGIVGT). Tyrosine 154 (proton acceptor) is an active-site residue.

This sequence belongs to the short-chain dehydrogenases/reductases (SDR) family. In terms of assembly, homotetramer.

The catalysed reaction is (S,S)-butane-2,3-diol + NAD(+) = (S)-acetoin + NADH + H(+). It catalyses the reaction (S)-acetoin + NAD(+) = diacetyl + NADH + H(+). Its activity is regulated as follows. Slightly activated by Ba(2+), Ca(2+), Mn(2+), Mg(2+), and Co(2+), while Hg(2+) and Cu(2+) cause marked inhibition of the activity. Ni(2+), Zn(2+) and Cd(2+) have no effect on the catalytic activity. Is also slightly inhibited by lactate, pyruvate, succinate, acetate and formate. Functionally, catalyzes the reversible reduction of (S)-acetoin to (S,S)-butane-2,3-diol (L-BD) in the presence of NADH. To a lesser extent, can also catalyze the irreversible reduction of diacetyl to (S)-acetoin. Cannot oxidize meso-BD, D-BD, 2-butanol, 1,2-propanediol, ethanol, acetol, 1,2-butanediol, 1,3-butanediol, n-butanol, and n-propanol. Cannot reduce (R)-acetoin, acetol, dihydroxyacetone and 2,4-pentanedione. This Corynebacterium glutamicum (Brevibacterium saccharolyticum) protein is L-2,3-butanediol dehydrogenase.